The following is a 566-amino-acid chain: Peroxisomal targeting signal receptor (566 aa).

A Glycyl cysteine thioester (Cys-Gly) (interchain with G-Cter in ubiquitin) cross-link involves residue C5. Positions 6 to 28 (SVGSNPLAQLNKHAQQNPALRQV) are amphipathic helix 1 (AH1). K17 participates in a covalent cross-link: Glycyl lysine isopeptide (Lys-Gly) (interchain with G-Cter in ubiquitin). Residues 53 to 71 (RFQMDQFMNRSPGFSDGQL) form an amphipathic helix 2 (AH2) region. Residues 88–159 (GLKKQDSGSS…IGRPMMHTGI (72 aa)) are disordered. Residues 94-142 (SGSSNMSAGDTAQHSRSWGNEFNSRSPQQGLASRVNNVERISNTNSMSS) are compositionally biased toward polar residues. A WxxxF/Y motif 1 motif is present at residues 111–115 (WGNEF). Positions 145–151 (PGMSRIG) are amphipathic helix 3 (AH3). Residues 187–191 (WNEQF) carry the WxxxF/Y motif 2 motif. An amphipathic helix 4 (AH4) region spans residues 225 to 241 (FQEVWDKLQAETADNNL). The short motif at 248-252 (WEKDY) is the WxxxF/Y motif 3 element. TPR repeat units lie at residues 277-311 (NPNA…DPAH), 312-345 (VDAW…DPTN), 416-449 (PEVQ…NPND), 451-483 (LMWN…KPSF), and 485-517 (RARY…HEVE).

This sequence belongs to the peroxisomal targeting signal receptor family. Interacts (via WxxxF/Y and LVxEF motifs) with PEX14; promoting translocation through the PEX13-PEX14 docking complex. In terms of processing, monoubiquitinated at Cys-5 by PEX2 during PEX5 passage through the retrotranslocation channel: monoubiquitination acts as a signal for PEX5 extraction and is required for proper export from peroxisomes and recycling. When PEX5 recycling is compromised, polyubiquitinated at Lys-17 by PEX10 during its passage through the retrotranslocation channel, leading to its degradation.

Its subcellular location is the cytoplasm. It localises to the cytosol. The protein localises to the peroxisome matrix. Its function is as follows. Receptor that mediates peroxisomal import of proteins containing a C-terminal PTS1-type tripeptide peroxisomal targeting signal (SKL-type). Binds to cargo proteins containing a PTS1 peroxisomal targeting signal in the cytosol, and translocates them into the peroxisome matrix by passing through the PEX13-PEX14 docking complex along with cargo proteins. PEX5 receptor is then retrotranslocated into the cytosol, leading to release of bound cargo in the peroxisome matrix, and reset for a subsequent peroxisome import cycle. The chain is Peroxisomal targeting signal receptor (PEX5) from Kluyveromyces lactis (strain ATCC 8585 / CBS 2359 / DSM 70799 / NBRC 1267 / NRRL Y-1140 / WM37) (Yeast).